Reading from the N-terminus, the 302-residue chain is Sulfate adenylyltransferase subunit 2 (302 aa).

This sequence belongs to the PAPS reductase family. CysD subfamily. Heterodimer composed of CysD, the smaller subunit, and CysN.

The enzyme catalyses sulfate + ATP + H(+) = adenosine 5'-phosphosulfate + diphosphate. The protein operates within sulfur metabolism; hydrogen sulfide biosynthesis; sulfite from sulfate: step 1/3. Functionally, with CysN forms the ATP sulfurylase (ATPS) that catalyzes the adenylation of sulfate producing adenosine 5'-phosphosulfate (APS) and diphosphate, the first enzymatic step in sulfur assimilation pathway. APS synthesis involves the formation of a high-energy phosphoric-sulfuric acid anhydride bond driven by GTP hydrolysis by CysN coupled to ATP hydrolysis by CysD. This Xanthomonas campestris pv. campestris (strain 8004) protein is Sulfate adenylyltransferase subunit 2.